A 156-amino-acid polypeptide reads, in one-letter code: Glutamine--fructose-6-phosphate aminotransferase [isomerizing] (156 aa).

The SIS domain occupies Met-4–Pro-146. The active-site For Fru-6P isomerization activity is Lys-151.

As to quaternary structure, homodimer.

It is found in the cytoplasm. It catalyses the reaction D-fructose 6-phosphate + L-glutamine = D-glucosamine 6-phosphate + L-glutamate. In terms of biological role, catalyzes the first step in hexosamine metabolism, converting fructose-6P into glucosamine-6P using glutamine as a nitrogen source. The chain is Glutamine--fructose-6-phosphate aminotransferase [isomerizing] (glmS) from Sphingobium yanoikuyae (Sphingomonas yanoikuyae).